The chain runs to 637 residues: 1-deoxy-D-xylulose-5-phosphate synthase (637 aa).

Thiamine diphosphate is bound by residues His71 and Ser112–Ala114. A Mg(2+)-binding site is contributed by Asp144. Thiamine diphosphate is bound by residues Gly145 to Ala146, Asn173, Tyr284, and Glu365. Asn173 provides a ligand contact to Mg(2+).

This sequence belongs to the transketolase family. DXPS subfamily. As to quaternary structure, homodimer. Mg(2+) is required as a cofactor. Requires thiamine diphosphate as cofactor.

It catalyses the reaction D-glyceraldehyde 3-phosphate + pyruvate + H(+) = 1-deoxy-D-xylulose 5-phosphate + CO2. The protein operates within metabolic intermediate biosynthesis; 1-deoxy-D-xylulose 5-phosphate biosynthesis; 1-deoxy-D-xylulose 5-phosphate from D-glyceraldehyde 3-phosphate and pyruvate: step 1/1. Its function is as follows. Catalyzes the acyloin condensation reaction between C atoms 2 and 3 of pyruvate and glyceraldehyde 3-phosphate to yield 1-deoxy-D-xylulose-5-phosphate (DXP). In Mycolicibacterium gilvum (strain PYR-GCK) (Mycobacterium gilvum (strain PYR-GCK)), this protein is 1-deoxy-D-xylulose-5-phosphate synthase.